The chain runs to 347 residues: NADH-quinone oxidoreductase subunit H 1 (347 aa).

A run of 9 helical transmembrane segments spans residues 14-34 (IMIG…AYVL), 50-70 (PNVV…KFVF), 83-103 (IFLL…AVIP), 115-135 (VGIL…IMGG), 161-181 (IGFV…TDIV), 198-218 (FLDW…ISAL), 258-278 (AICL…LPPV), 286-306 (VPGI…FAMV), and 321-341 (LGWK…AFVL).

This sequence belongs to the complex I subunit 1 family. As to quaternary structure, NDH-1 is composed of 14 different subunits. Subunits NuoA, H, J, K, L, M, N constitute the membrane sector of the complex.

Its subcellular location is the cell inner membrane. It catalyses the reaction a quinone + NADH + 5 H(+)(in) = a quinol + NAD(+) + 4 H(+)(out). In terms of biological role, NDH-1 shuttles electrons from NADH, via FMN and iron-sulfur (Fe-S) centers, to quinones in the respiratory chain. The immediate electron acceptor for the enzyme in this species is believed to be ubiquinone. Couples the redox reaction to proton translocation (for every two electrons transferred, four hydrogen ions are translocated across the cytoplasmic membrane), and thus conserves the redox energy in a proton gradient. This subunit may bind ubiquinone. The chain is NADH-quinone oxidoreductase subunit H 1 from Rhizobium meliloti (strain 1021) (Ensifer meliloti).